The chain runs to 253 residues: Sulfate transporter CysZ (253 aa).

Transmembrane regions (helical) follow at residues 31–51 (FVILPLLVNIVLMGGAFWWLF), 72–92 (LSYLLWPIAVISVLLVFGYFF), 151–171 (IVLLVLYFIPGIGQTIAPVLW), and 222–242 (IPVLNLFIMPVAVCGATAMWV).

It belongs to the CysZ family.

The protein localises to the cell inner membrane. Its function is as follows. High affinity, high specificity proton-dependent sulfate transporter, which mediates sulfate uptake. Provides the sulfur source for the cysteine synthesis pathway. The protein is Sulfate transporter CysZ of Salmonella paratyphi A (strain AKU_12601).